Consider the following 49-residue polypeptide: Large ribosomal subunit protein bL33A (49 aa).

The protein belongs to the bacterial ribosomal protein bL33 family.

In Levilactobacillus brevis (strain ATCC 367 / BCRC 12310 / CIP 105137 / JCM 1170 / LMG 11437 / NCIMB 947 / NCTC 947) (Lactobacillus brevis), this protein is Large ribosomal subunit protein bL33A.